A 432-amino-acid polypeptide reads, in one-letter code: Glutamyl-tRNA reductase (432 aa).

Residues 49-52, serine 101, 106-108, and glutamine 112 each bind substrate; these read TCNR and EPQ. Cysteine 50 (nucleophile) is an active-site residue. 181–186 is an NADP(+) binding site; sequence GAGETI. Positions 408–432 are disordered; sequence PEKPGYRHPPVATPIVRTDDANPAP.

Belongs to the glutamyl-tRNA reductase family. Homodimer.

It carries out the reaction (S)-4-amino-5-oxopentanoate + tRNA(Glu) + NADP(+) = L-glutamyl-tRNA(Glu) + NADPH + H(+). It participates in porphyrin-containing compound metabolism; protoporphyrin-IX biosynthesis; 5-aminolevulinate from L-glutamyl-tRNA(Glu): step 1/2. Its function is as follows. Catalyzes the NADPH-dependent reduction of glutamyl-tRNA(Glu) to glutamate 1-semialdehyde (GSA). In Xanthomonas campestris pv. campestris (strain 8004), this protein is Glutamyl-tRNA reductase.